A 349-amino-acid chain; its full sequence is Histidinol-phosphate aminotransferase (349 aa).

An N6-(pyridoxal phosphate)lysine modification is found at Lys206.

It belongs to the class-II pyridoxal-phosphate-dependent aminotransferase family. Histidinol-phosphate aminotransferase subfamily. As to quaternary structure, homodimer. Pyridoxal 5'-phosphate is required as a cofactor.

The enzyme catalyses L-histidinol phosphate + 2-oxoglutarate = 3-(imidazol-4-yl)-2-oxopropyl phosphate + L-glutamate. It participates in amino-acid biosynthesis; L-histidine biosynthesis; L-histidine from 5-phospho-alpha-D-ribose 1-diphosphate: step 7/9. This chain is Histidinol-phosphate aminotransferase, found in Hydrogenobaculum sp. (strain Y04AAS1).